Reading from the N-terminus, the 939-residue chain is Intimin (939 aa).

The first 41 residues, 1–41, serve as a signal peptide directing secretion; it reads MITHGFYARTRHKHKLKKTFIMLSAGLGLFFYVNQNSFANG. The tract at residues 40-153 is peptidoglycan-binding; sequence NGENYFKLGS…KLTKMSPDVT (114 aa). The segment at 40–153 is sufficient for homodimerization; sequence NGENYFKLGS…KLTKMSPDVT (114 aa). The required for periplasmic localization stretch occupies residues 40-212; sequence NGENYFKLGS…LQAWLQHYGT (173 aa). One can recognise a LysM domain in the interval 63 to 112; that stretch reads LFYTLKTGETVADLSKSQDINLSTIWSLNKHLYSSESEMMKAAPGQQIIL. Residues 189–430 are inverse autotransporter; the sequence is DTALGIAGNQ…PQYVNELRTL (242 aa). The signature sequence for beta-barrel assembly machinery (BAM), which recognizes the unfolded beta-barrel in the periplasm stretch occupies residues 402 to 411; sequence LYSMQFRYQF. Big-1 domains follow at residues 560–653 and 660–751; these read VTDF…VIFV and ITEI…VEFF. Positions 750 to 939 are required and sufficient for interaction with intimin receptor Tir; the sequence is FFTTLTIDDG…ESNAYATCVK (190 aa). Residues 842 to 939 form a C-type lectin domain region; sequence LIVPNMSKRV…ESNAYATCVK (98 aa). Residues 842–939 are intimin receptor Tir-binding; that stretch reads LIVPNMSKRV…ESNAYATCVK (98 aa). C860 and C937 are oxidised to a cystine.

The protein belongs to the intimin/invasin family. In terms of assembly, homodimer. Interacts with Tir.

Its subcellular location is the cell outer membrane. An inverse autotransporter. Adhesin, which mediates attachment to the human intestine epithelial cells. Necessary for the production of attaching and effacing lesions on infected human tissue culture cells. Anchored to the outer membrane by binding to peptidoglycan (PGN) via its periplasmic domain, thus helping in receptor interactions during host invasion. PGN-binding may also aid in resisting mechanical and chemical stress during transit of the bacterium through the gastrointestinal tract of the host. Periplasmic domain binds purified E.coli PGN sacculi under acidic conditions in vitro and in vivo, but does not bind to chitin. Periplasmic domain binds PGN sacculi with an apparent dissociation constant (Kd) of 0.8 uM. No binding to PGN in vitro at normal physiological pH 7.4. The protein is Intimin of Escherichia coli O127:H6 (strain E2348/69 / EPEC).